Reading from the N-terminus, the 376-residue chain is Succinyl-diaminopimelate desuccinylase (376 aa).

His67 contributes to the Zn(2+) binding site. The active site involves Asp69. Residue Asp100 participates in Zn(2+) binding. Glu134 functions as the Proton acceptor in the catalytic mechanism. Residues Glu135, Glu163, and His349 each contribute to the Zn(2+) site.

This sequence belongs to the peptidase M20A family. DapE subfamily. Homodimer. It depends on Zn(2+) as a cofactor. Co(2+) serves as cofactor.

It catalyses the reaction N-succinyl-(2S,6S)-2,6-diaminopimelate + H2O = (2S,6S)-2,6-diaminopimelate + succinate. It participates in amino-acid biosynthesis; L-lysine biosynthesis via DAP pathway; LL-2,6-diaminopimelate from (S)-tetrahydrodipicolinate (succinylase route): step 3/3. Catalyzes the hydrolysis of N-succinyl-L,L-diaminopimelic acid (SDAP), forming succinate and LL-2,6-diaminopimelate (DAP), an intermediate involved in the bacterial biosynthesis of lysine and meso-diaminopimelic acid, an essential component of bacterial cell walls. In Xanthomonas campestris pv. campestris (strain B100), this protein is Succinyl-diaminopimelate desuccinylase.